The sequence spans 503 residues: Probable DNA ligase (503 aa).

Asp-212 contributes to the ATP binding site. Lys-214 functions as the N6-AMP-lysine intermediate in the catalytic mechanism. Positions 219, 234, 263, 296, 368, and 374 each coordinate ATP.

The protein belongs to the ATP-dependent DNA ligase family. It depends on Mg(2+) as a cofactor.

It carries out the reaction ATP + (deoxyribonucleotide)n-3'-hydroxyl + 5'-phospho-(deoxyribonucleotide)m = (deoxyribonucleotide)n+m + AMP + diphosphate.. DNA ligase that seals nicks in double-stranded DNA during DNA replication, DNA recombination and DNA repair. The chain is Probable DNA ligase from Kineococcus radiotolerans (strain ATCC BAA-149 / DSM 14245 / SRS30216).